Consider the following 327-residue polypeptide: MSQPERDNCSFDSVDKLTRTLQLAVHIPTFLLGLVLNLLAIRGFSAFLKKRKLDYIATSIYMINLAVFDLLLVLSLPFKMVLPQVESPLPSFCTLVECLYFISMYGSVFTICFISLDRFLAIQYPILASHLRSPRKTFGICCIIWMLVWIGSIPIYTFHREVERYKCFHNMSDVTWSASVFFPLEIFGFLLPMGIMGFCSYRSIHILLRRPDSTEDWVQQRDTKGWVQKRACIWTIATNLVIFVVSFLPVHLGFFLQYLVRNRFILDCRMKQGISLFLQLSLCFSNINCCLDVFCYYFVIKEFRMRIKAHRPSTIKLVNQDTMVSRG.

Over 1-20 the chain is Extracellular; sequence MSQPERDNCSFDSVDKLTRT. An N-linked (GlcNAc...) asparagine glycan is attached at N8. A helical membrane pass occupies residues 21–41; sequence LQLAVHIPTFLLGLVLNLLAI. Residues 42 to 57 are Cytoplasmic-facing; it reads RGFSAFLKKRKLDYIA. Residues 58-78 traverse the membrane as a helical segment; sequence TSIYMINLAVFDLLLVLSLPF. The Extracellular portion of the chain corresponds to 79-93; that stretch reads KMVLPQVESPLPSFC. The chain crosses the membrane as a helical span at residues 94–114; the sequence is TLVECLYFISMYGSVFTICFI. Topologically, residues 115–136 are cytoplasmic; that stretch reads SLDRFLAIQYPILASHLRSPRK. Residues 137–157 traverse the membrane as a helical segment; that stretch reads TFGICCIIWMLVWIGSIPIYT. The Extracellular segment spans residues 158-179; that stretch reads FHREVERYKCFHNMSDVTWSAS. An N-linked (GlcNAc...) asparagine glycan is attached at N170. Residues 180 to 200 traverse the membrane as a helical segment; the sequence is VFFPLEIFGFLLPMGIMGFCS. Over 201 to 239 the chain is Cytoplasmic; it reads YRSIHILLRRPDSTEDWVQQRDTKGWVQKRACIWTIATN. Residues 240-260 traverse the membrane as a helical segment; the sequence is LVIFVVSFLPVHLGFFLQYLV. The Extracellular segment spans residues 261–279; that stretch reads RNRFILDCRMKQGISLFLQ. Residues 280-300 form a helical membrane-spanning segment; that stretch reads LSLCFSNINCCLDVFCYYFVI. Residues 301-327 lie on the Cytoplasmic side of the membrane; the sequence is KEFRMRIKAHRPSTIKLVNQDTMVSRG.

It belongs to the G-protein coupled receptor 1 family. As to expression, highly expressed in splenic plasma cells.

Its subcellular location is the cell membrane. Functionally, G-protein coupled receptor that binds to several ligands including 2-arachidonoyl lysophosphatidylinositol or lysophosphatidylglucoside with high affinity, leading to rapid and transient activation of numerous intracellular signaling pathways. Induces the Ca(2+) release from intracellular stores via ERK, the heterotrimeric G protein GNA13 and RHOA leading to morphological changes including cell rounding and stress fiber formation. In macrophages, acts downstream of lysophosphatidylglucoside to inhibit the translocation of the phospholipid-transporting ABCA1 to plasma membrane and subsequent cholesterol efflux leading to lipid accumulation and foam cell formation. May be involved in hyperalgesia associated with inflammatory and neuropathic pain. This Mus musculus (Mouse) protein is G-protein coupled receptor 55 (Gpr55).